The primary structure comprises 826 residues: MSKAVISEKAEPRELKALYIVGPEIEPDPEILKLYDRKDCLVVGDGIDDADIYAIYLELKKHNVQIGPNTRIDIAAHGKRVDKKHYLRLSTEEVTETKKFLQQLQGSSPIDPIYVHLWSCYGGTANKDIAFLNPGSIIVTHVKSQYSSFGPADNFAHLHSITRYINEKNLTPHLQYLYDQLENYQATTFNQKESDGRIVKFKTTRTPEHDSMANIISNILEQKQSEELLKEFQNYLNKEAENFSKLFGEYLASEDKEKFQHYTSNISDKDLKNYVTGLLLNIANLSNKNNIKDKEKILTILNKIVNILGTSLLAVTVRNNNVELTKALLNKGADQHAKYTKIDMSLLYIACLNKSVDIAKLLLEYNVDPNYPTTDNDTPLLQACEKKSPELVKALLAKNADPNKVSDRGLSPLIVSCINPSEESREIALNLLANKNIKVNILGPNDFTPLILACYNNSERVVQALLDKEADVNAKDKDGFTPLFAAYRNHSTKITELLLEKGANPDVINPKTKSSILYNACNEGDLNIIKLLLKHKANPNLTTFDGTTPLMAACEKGDLEIAALLLKNGADINKSNNNGDNALFLACKNGNLELVKMLVENGVDLKKGSRGMIASSIAKKNGYEKVGAFLKAEIKSQRTLNTNQSNNPLPPKPPRLIKNTTTQNEENKKTWIKSEANLTLSQPHYNFLQSNSEAKSRALREINPLIEAAIKEVDKVNTVNVAVREEVQNILSKELLRIPINNLVDNKKGIINQITKELKLNNSQDNNNREYKISQQSLKEIGNKIFAAYGHKIQPQLTNTTTHRWQNYIKTTNNTNANKSNYLGKR.

ANK repeat units follow at residues 308–337 (LGTS…DQHA), 342–371 (IDMS…DPNY), 375–404 (DNDT…DPNK), 445–474 (NDFT…DVNA), 478–507 (DGFT…NPDV), 512–541 (TKSS…NPNL), 545–574 (DGTT…DINK), and 578–607 (NGDN…DLKK).

The protein is Putative ankyrin repeat protein RBE_0220 of Rickettsia bellii (strain RML369-C).